We begin with the raw amino-acid sequence, 372 residues long: Carbamoyl phosphate synthase small chain (372 aa).

A CPSase region spans residues 1-182; it reads MTLYCKRGYK…PKAPIVHLGN (182 aa). Residues S53, G234, and G236 each coordinate L-glutamine. The Glutamine amidotransferase type-1 domain maps to 186-372; that stretch reads TIVVVDCGVK…KFKKMVSRNA (187 aa). C262 serves as the catalytic Nucleophile. L263, Q266, N304, G306, and Y307 together coordinate L-glutamine. Catalysis depends on residues H347 and E349.

This sequence belongs to the CarA family. Composed of two chains; the small (or glutamine) chain promotes the hydrolysis of glutamine to ammonia, which is used by the large (or ammonia) chain to synthesize carbamoyl phosphate. Tetramer of heterodimers (alpha,beta)4.

The catalysed reaction is hydrogencarbonate + L-glutamine + 2 ATP + H2O = carbamoyl phosphate + L-glutamate + 2 ADP + phosphate + 2 H(+). It catalyses the reaction L-glutamine + H2O = L-glutamate + NH4(+). It functions in the pathway amino-acid biosynthesis; L-arginine biosynthesis; carbamoyl phosphate from bicarbonate: step 1/1. It participates in pyrimidine metabolism; UMP biosynthesis via de novo pathway; (S)-dihydroorotate from bicarbonate: step 1/3. In terms of biological role, small subunit of the glutamine-dependent carbamoyl phosphate synthetase (CPSase). CPSase catalyzes the formation of carbamoyl phosphate from the ammonia moiety of glutamine, carbonate, and phosphate donated by ATP, constituting the first step of 2 biosynthetic pathways, one leading to arginine and/or urea and the other to pyrimidine nucleotides. The small subunit (glutamine amidotransferase) binds and cleaves glutamine to supply the large subunit with the substrate ammonia. The polypeptide is Carbamoyl phosphate synthase small chain (Sulfurisphaera tokodaii (strain DSM 16993 / JCM 10545 / NBRC 100140 / 7) (Sulfolobus tokodaii)).